Consider the following 155-residue polypeptide: Large ribosomal subunit protein uL15 (155 aa).

Residues 1–13 (MKLNELRDAEGAT) show a composition bias toward basic and acidic residues. The tract at residues 1–41 (MKLNELRDAEGATKARKRVGRGIGSGSGKTGGRGVKGQKSR) is disordered. Residues 21 to 35 (RGIGSGSGKTGGRGV) are compositionally biased toward gly residues.

This sequence belongs to the universal ribosomal protein uL15 family. In terms of assembly, part of the 50S ribosomal subunit.

Binds to the 23S rRNA. This chain is Large ribosomal subunit protein uL15, found in Chelativorans sp. (strain BNC1).